Consider the following 260-residue polypeptide: UPF0246 protein Tola_0968 (260 aa).

This sequence belongs to the UPF0246 family.

This Tolumonas auensis (strain DSM 9187 / NBRC 110442 / TA 4) protein is UPF0246 protein Tola_0968.